The primary structure comprises 318 residues: MSALVGNARTSDPAAFGRVAVLLGGTSSEREVSLNSGGNVLDALRARGVDAQPVDGIPALAKALVAQQFDRVFNVLHGHNGGGEDGIVQGLMEAFGVPYTGSDVLGSALSMDKIRTKQVWLSLGLSTPRYARLAAGASAEDIHAAARQIGLPIIVKPANEGSSVGVSRVFDQAQLEEAVTLAARYDGALLMEQLIEGDELTVAVLGDTALPSIRIVPKGQWYDYNAKYIADDTQYLCPGLEGEAEAQIRQLALDAFRAAGCRGWGRVDVMRDGSSGQLYLLEVNTAPGMTSHSLVPKAARQLGIDFETLVWRVLEQTL.

In terms of domain architecture, ATP-grasp spans lysine 117–glutamate 315. Alanine 146–threonine 201 contributes to the ATP binding site. Residues aspartate 268, glutamate 282, and asparagine 284 each coordinate Mg(2+).

The protein belongs to the D-alanine--D-alanine ligase family. The cofactor is Mg(2+). It depends on Mn(2+) as a cofactor.

The protein resides in the cytoplasm. It carries out the reaction 2 D-alanine + ATP = D-alanyl-D-alanine + ADP + phosphate + H(+). The protein operates within cell wall biogenesis; peptidoglycan biosynthesis. Cell wall formation. This is D-alanine--D-alanine ligase from Xanthomonas axonopodis pv. citri (strain 306).